The sequence spans 324 residues: NADH-dependent D-xylose reductase (324 aa).

Tyr-54 acts as the Proton donor in catalysis. His-116 is a binding site for substrate. Position 220 to 286 (220 to 286 (SSFGPQSFLE…SNSPDRMAQN (67 aa))) interacts with NAD(+).

This sequence belongs to the aldo/keto reductase family.

It carries out the reaction xylitol + NAD(+) = D-xylose + NADH + H(+). The catalysed reaction is xylitol + NADP(+) = D-xylose + NADPH + H(+). It functions in the pathway carbohydrate metabolism; D-xylose degradation. Reduces D-xylose into xylitol. Preferentially utilizes NADH as a cosubstrate. This Candida parapsilosis (Yeast) protein is NADH-dependent D-xylose reductase (XYL1).